Here is a 447-residue protein sequence, read N- to C-terminus: Putative metabolite transport protein HI_0418 (447 aa).

The Cytoplasmic portion of the chain corresponds to 1–28 (MCKPQQKHYGRQVMNTQNSLKQVATATM). The helical transmembrane segment at 29–49 (VGTAIEYFDNYIYAMAAVLVF) threads the bilayer. The Periplasmic portion of the chain corresponds to 50–63 (NHQFFHAVDPLSGQ). A helical membrane pass occupies residues 64 to 84 (IAALSTLALTFIARPLGAILF). Residues 85 to 96 (GHFGDRFGRKNT) are Cytoplasmic-facing. Residues 97-117 (FVMSLLLMGISTVVIGLLPTY) traverse the membrane as a helical segment. Residues 118 to 119 (DS) lie on the Periplasmic side of the membrane. Residues 120-140 (IGIWATILLCLCRIGQGIGLG) form a helical membrane-spanning segment. Residues 141–167 (GEWGGAALVAVENAPEGKRGWYGTFPQ) are Cytoplasmic-facing. Residues 168–188 (LGAPLGLLLANGVFLGITAIF) form a helical membrane-spanning segment. The Periplasmic segment spans residues 189–194 (GQEAMT). A helical transmembrane segment spans residues 195-215 (EWAWRIPFLSSVILVAIGLYV). Topologically, residues 216–249 (RLKLTEAPIFLAALNKPKPKRLPMLEVVTTHFKP) are cytoplasmic. The chain crosses the membrane as a helical span at residues 250–270 (FFLGMLVCIAGYVLFYIMIAF). Residues 271-295 (SQIYAKSAPTVSEAGYAMGLGFSPQ) lie on the Periplasmic side of the membrane. A helical membrane pass occupies residues 296 to 316 (IFTALLMASAVSLAITIAASG). Topologically, residues 317-325 (KYIDKIGRR) are cytoplasmic. Residues 326 to 346 (TWLIWTTVGVAIFGLSLPLFL) traverse the membrane as a helical segment. Over 347 to 354 (ENGTTTSL) the chain is Periplasmic. The chain crosses the membrane as a helical span at residues 355 to 375 (FWFLFIGMGLIGMGYGPLASF). Residues 376–390 (LPELFPTHARYSGAS) lie on the Cytoplasmic side of the membrane. The chain crosses the membrane as a helical span at residues 391-411 (LTYNIAGLFGASVAAIIALPL). The Periplasmic portion of the chain corresponds to 412–418 (NAHYGLK). The chain crosses the membrane as a helical span at residues 419-439 (GVGIYLTLNAVLSLVGLWFIS). Residues 440–447 (ETKDKLLS) lie on the Cytoplasmic side of the membrane.

This sequence belongs to the major facilitator superfamily. Metabolite:H+ Symporter (MHS) family (TC 2.A.1.6) family.

It is found in the cell inner membrane. The sequence is that of Putative metabolite transport protein HI_0418 from Haemophilus influenzae (strain ATCC 51907 / DSM 11121 / KW20 / Rd).